Here is a 203-residue protein sequence, read N- to C-terminus: 3-isopropylmalate dehydratase small subunit (203 aa).

This sequence belongs to the LeuD family. LeuD type 1 subfamily. As to quaternary structure, heterodimer of LeuC and LeuD.

It catalyses the reaction (2R,3S)-3-isopropylmalate = (2S)-2-isopropylmalate. It participates in amino-acid biosynthesis; L-leucine biosynthesis; L-leucine from 3-methyl-2-oxobutanoate: step 2/4. Functionally, catalyzes the isomerization between 2-isopropylmalate and 3-isopropylmalate, via the formation of 2-isopropylmaleate. This Pelagibacter ubique (strain HTCC1062) protein is 3-isopropylmalate dehydratase small subunit.